Consider the following 468-residue polypeptide: Interleukin-9 receptor (468 aa).

A signal peptide spans 1–37 (MALGRCIAEGWTLERVAVKQVSWFLIYSWVCSGVCRG). Topologically, residues 38 to 270 (VSVPEQGGGG…GLLVPRWQWS (233 aa)) are extracellular. 2 N-linked (GlcNAc...) asparagine glycosylation sites follow: asparagine 116 and asparagine 155. The Fibronectin type-III domain occupies 148–256 (PPSDLQSNVS…WSQPVSFPSP (109 aa)). The short motif at 244–248 (WSEWS) is the WSXWS motif element. The helical transmembrane segment at 271–291 (ASILVVVPIFLLLTGFVHLLF) threads the bilayer. The Cytoplasmic segment spans residues 292-468 (KLSPRLKRIF…PVALPVSSRA (177 aa)). The Box 1 motif motif lies at 301 to 309 (FYQNIPSPE). A disordered region spans residues 407–426 (PQEDWAPLGSARPPPPDSDS).

The protein belongs to the type I cytokine receptor family. Type 4 subfamily. As to quaternary structure, interacts with IL9.

It localises to the cell membrane. The protein resides in the secreted. In terms of biological role, plays an important role in the immune response against parasites by acting as a receptor of IL9. The sequence is that of Interleukin-9 receptor (Il9r) from Mus musculus (Mouse).